A 152-amino-acid chain; its full sequence is uncharacterized protein (152 aa).

This is an uncharacterized protein from Brachyspira hyodysenteriae (Treponema hyodysenteriae).